The chain runs to 314 residues: MSKKRYPRLFGILPFLGMLLLSGCNWTLLDPKGQVGIEQKNLILIATGLMLLVVIPVIIMTVVFAWKYRASNKAATYTPDWSHSTKIEAAVWIIPILIIIALGYFTYHSTHKLDPYRPLDSDVKPVQIDVVALDWKWLFIYPEQGIATVNKIVFPANTPVNFRVTSDAVMNSFFIPGLGGQIYAMAGMTTKLHLIANENGEFDGISANYSGAGFTGMKFKATATSQEDFDKWVAEVKQSPKKLDKAEYEALAKPSENNPVALYSEASPDQFQLIVDKYEGMNRGRPSHEEAGSKDLATTKGVESSMQPAAGAEE.

Residues 1–23 form the signal peptide; it reads MSKKRYPRLFGILPFLGMLLLSG. The N-palmitoyl cysteine moiety is linked to residue cysteine 24. Cysteine 24 is lipidated: S-diacylglycerol cysteine. Topologically, residues 24–42 are periplasmic; it reads CNWTLLDPKGQVGIEQKNL. The chain crosses the membrane as a helical span at residues 43-63; sequence ILIATGLMLLVVIPVIIMTVV. The Cytoplasmic portion of the chain corresponds to 64-86; the sequence is FAWKYRASNKAATYTPDWSHSTK. A helical membrane pass occupies residues 87-107; sequence IEAAVWIIPILIIIALGYFTY. Over 108–314 the chain is Periplasmic; that stretch reads HSTHKLDPYR…SMQPAAGAEE (207 aa). Over residues 278–293 the composition is skewed to basic and acidic residues; that stretch reads YEGMNRGRPSHEEAGS. Positions 278–314 are disordered; sequence YEGMNRGRPSHEEAGSKDLATTKGVESSMQPAAGAEE.

It belongs to the cytochrome c oxidase subunit 2 family. As to quaternary structure, heterooctamer of two A chains, two B chains, two C chains and two D chains.

Its subcellular location is the cell inner membrane. In terms of biological role, cytochrome bo(3) ubiquinol terminal oxidase is the component of the aerobic respiratory chain of E.coli that predominates when cells are grown at high aeration. Has proton pump activity across the membrane in addition to electron transfer, pumping 2 protons/electron. The sequence is that of Cytochrome bo(3) ubiquinol oxidase subunit 2 (cyoA) from Pseudomonas putida (Arthrobacter siderocapsulatus).